Here is a 407-residue protein sequence, read N- to C-terminus: Succinyl-diaminopimelate desuccinylase (407 aa).

Residues Met-1 to Ser-10 are compositionally biased toward polar residues. The interval Met-1–Gln-20 is disordered. The span at Gln-11–Gln-20 shows a compositional bias: low complexity. His-93 is a Zn(2+) binding site. Asp-95 is a catalytic residue. Asp-126 contributes to the Zn(2+) binding site. Residue Glu-160 is the Proton acceptor of the active site. Zn(2+) is bound by residues Glu-161, Glu-189, and His-379.

It belongs to the peptidase M20A family. DapE subfamily. In terms of assembly, homodimer. It depends on Zn(2+) as a cofactor. The cofactor is Co(2+).

It carries out the reaction N-succinyl-(2S,6S)-2,6-diaminopimelate + H2O = (2S,6S)-2,6-diaminopimelate + succinate. Its pathway is amino-acid biosynthesis; L-lysine biosynthesis via DAP pathway; LL-2,6-diaminopimelate from (S)-tetrahydrodipicolinate (succinylase route): step 3/3. In terms of biological role, catalyzes the hydrolysis of N-succinyl-L,L-diaminopimelic acid (SDAP), forming succinate and LL-2,6-diaminopimelate (DAP), an intermediate involved in the bacterial biosynthesis of lysine and meso-diaminopimelic acid, an essential component of bacterial cell walls. The polypeptide is Succinyl-diaminopimelate desuccinylase (Psychrobacter arcticus (strain DSM 17307 / VKM B-2377 / 273-4)).